The primary structure comprises 633 residues: Threonine--tRNA ligase (633 aa).

The 61-residue stretch at 1-61 (MINISFPDGS…DNDCRLRILT (61 aa)) folds into the TGS domain. The catalytic stretch occupies residues 242-533 (DHRKLGKELD…LIEEYAGRFP (292 aa)). The Zn(2+) site is built by C333, H384, and H510.

The protein belongs to the class-II aminoacyl-tRNA synthetase family. As to quaternary structure, homodimer. The cofactor is Zn(2+).

The protein resides in the cytoplasm. It carries out the reaction tRNA(Thr) + L-threonine + ATP = L-threonyl-tRNA(Thr) + AMP + diphosphate + H(+). Catalyzes the attachment of threonine to tRNA(Thr) in a two-step reaction: L-threonine is first activated by ATP to form Thr-AMP and then transferred to the acceptor end of tRNA(Thr). Also edits incorrectly charged L-seryl-tRNA(Thr). The chain is Threonine--tRNA ligase from Rickettsia bellii (strain OSU 85-389).